Reading from the N-terminus, the 859-residue chain is Fanconi anemia group B protein (859 aa).

An N-acetylthreonine modification is found at Thr2.

Belongs to the multisubunit FA complex composed of FANCA, FANCB, FANCC, FANCE, FANCF, FANCG, FANCL/PHF9 and FANCM. The complex is not found in FA patients.

It is found in the nucleus. DNA repair protein required for FANCD2 ubiquitination. The polypeptide is Fanconi anemia group B protein (FANCB) (Homo sapiens (Human)).